We begin with the raw amino-acid sequence, 89 residues long: Small ribosomal subunit protein uS15 (89 aa).

This sequence belongs to the universal ribosomal protein uS15 family. In terms of assembly, part of the 30S ribosomal subunit. Forms a bridge to the 50S subunit in the 70S ribosome, contacting the 23S rRNA.

Functionally, one of the primary rRNA binding proteins, it binds directly to 16S rRNA where it helps nucleate assembly of the platform of the 30S subunit by binding and bridging several RNA helices of the 16S rRNA. Its function is as follows. Forms an intersubunit bridge (bridge B4) with the 23S rRNA of the 50S subunit in the ribosome. The sequence is that of Small ribosomal subunit protein uS15 from Rhizobium meliloti (strain 1021) (Ensifer meliloti).